The chain runs to 229 residues: Enolase-phosphatase E1 (229 aa).

It belongs to the HAD-like hydrolase superfamily. MasA/MtnC family. In terms of assembly, monomer. The cofactor is Mg(2+).

The enzyme catalyses 5-methylsulfanyl-2,3-dioxopentyl phosphate + H2O = 1,2-dihydroxy-5-(methylsulfanyl)pent-1-en-3-one + phosphate. It participates in amino-acid biosynthesis; L-methionine biosynthesis via salvage pathway; L-methionine from S-methyl-5-thio-alpha-D-ribose 1-phosphate: step 3/6. Its pathway is amino-acid biosynthesis; L-methionine biosynthesis via salvage pathway; L-methionine from S-methyl-5-thio-alpha-D-ribose 1-phosphate: step 4/6. In terms of biological role, bifunctional enzyme that catalyzes the enolization of 2,3-diketo-5-methylthiopentyl-1-phosphate (DK-MTP-1-P) into the intermediate 2-hydroxy-3-keto-5-methylthiopentenyl-1-phosphate (HK-MTPenyl-1-P), which is then dephosphorylated to form the acireductone 1,2-dihydroxy-3-keto-5-methylthiopentene (DHK-MTPene). In Yersinia enterocolitica serotype O:8 / biotype 1B (strain NCTC 13174 / 8081), this protein is Enolase-phosphatase E1.